A 209-amino-acid polypeptide reads, in one-letter code: Type III pantothenate kinase (209 aa).

5–12 (DIGNSNAN) provides a ligand contact to ATP. Substrate contacts are provided by residues Tyr68 and 72–75 (GIDR). The Proton acceptor role is filled by Asp74. Asp89 contributes to the K(+) binding site. An ATP-binding site is contributed by Ser92. Substrate is bound at residue Thr144.

The protein belongs to the type III pantothenate kinase family. In terms of assembly, homodimer. NH4(+) is required as a cofactor. K(+) serves as cofactor.

The protein resides in the cytoplasm. The enzyme catalyses (R)-pantothenate + ATP = (R)-4'-phosphopantothenate + ADP + H(+). The protein operates within cofactor biosynthesis; coenzyme A biosynthesis; CoA from (R)-pantothenate: step 1/5. In terms of biological role, catalyzes the phosphorylation of pantothenate (Pan), the first step in CoA biosynthesis. This is Type III pantothenate kinase from Campylobacter jejuni (strain RM1221).